Consider the following 480-residue polypeptide: Phosphoglucosamine mutase (480 aa).

Residues 1 to 41 (MPKHTKKDPREGAPSATGEPQKQAAGRKLFGTDGVRGVANQ) are disordered. S127 serves as the catalytic Phosphoserine intermediate. Residues S127, D269, D271, and D273 each coordinate Mg(2+). Position 127 is a phosphoserine (S127).

The protein belongs to the phosphohexose mutase family. It depends on Mg(2+) as a cofactor. In terms of processing, activated by phosphorylation.

The enzyme catalyses alpha-D-glucosamine 1-phosphate = D-glucosamine 6-phosphate. Functionally, catalyzes the conversion of glucosamine-6-phosphate to glucosamine-1-phosphate. The protein is Phosphoglucosamine mutase of Sorangium cellulosum (strain So ce56) (Polyangium cellulosum (strain So ce56)).